Consider the following 515-residue polypeptide: Protein translocase subunit SecD (515 aa).

The next 6 helical transmembrane spans lie at 5–25 (LIAKLLLIAAVIGFCIHLATP), 353–373 (KGILSVTIGMALVLLFMVAYY), 375–395 (LSGLLANMALLMNLIILMGLL), 398–418 (FGATLTLPGIAGIILTIGIAV), 450–470 (FSTILDANITTLIVAVILFQF), and 477–497 (GFAVTLSIGILASMFTAILCT).

The protein belongs to the SecD/SecF family. SecD subfamily. As to quaternary structure, forms a complex with SecF. Part of the essential Sec protein translocation apparatus which comprises SecA, SecYEG and auxiliary proteins SecDF. Other proteins may also be involved.

It is found in the cell inner membrane. Functionally, part of the Sec protein translocase complex. Interacts with the SecYEG preprotein conducting channel. SecDF uses the proton motive force (PMF) to complete protein translocation after the ATP-dependent function of SecA. This is Protein translocase subunit SecD from Desulfurispirillum indicum (strain ATCC BAA-1389 / DSM 22839 / S5).